The primary structure comprises 442 residues: Pentatricopeptide repeat-containing protein At2g27800, mitochondrial (442 aa).

Residues 1–67 (MSATRSTFLG…SFLPSIHVRF (67 aa)) constitute a mitochondrion transit peptide. 6 PPR repeats span residues 206–236 (NENL…MVTS), 244–286 (TIRT…GIEP), 287–322 (DVFA…DCEP), 323–357 (NSFT…GFVP), 358–392 (NGKS…GRVV), and 393–427 (DFIS…QLVD).

Belongs to the PPR family. P subfamily.

It localises to the mitochondrion. In Arabidopsis thaliana (Mouse-ear cress), this protein is Pentatricopeptide repeat-containing protein At2g27800, mitochondrial.